A 311-amino-acid chain; its full sequence is MANPLYQKHIISINDLSRDDLNLVLATAAKLKANPQPELLKHKVIASCFFEASTRTRLSFETSMHRLGASVVGFSDSANTSLGKKGETLADTISVISTYVDAIVMRHPQEGAARLATEFSGNVPVLNAGDGSNQHPTQTLLDLFTIQETQGRLDNLHVAMVGDLKYGRTVHSLTQALAKFDGNRFYFIAPDALAMPQYILDMLDEKGIAWSLHSSIEEVMAEVDILYMTRVQKERLDPSEYANVKAQFVLRASDLHNAKANMKVLHPLPRVDEIATDVDKTPHAWYFQQAGNGIFARQALLALVLNRDLVL.

2 residues coordinate carbamoyl phosphate: R55 and T56. An L-aspartate-binding site is contributed by K85. The carbamoyl phosphate site is built by R106, H135, and Q138. L-aspartate-binding residues include R168 and R230. L268 and P269 together coordinate carbamoyl phosphate.

This sequence belongs to the aspartate/ornithine carbamoyltransferase superfamily. ATCase family. In terms of assembly, heterododecamer (2C3:3R2) of six catalytic PyrB chains organized as two trimers (C3), and six regulatory PyrI chains organized as three dimers (R2).

The enzyme catalyses carbamoyl phosphate + L-aspartate = N-carbamoyl-L-aspartate + phosphate + H(+). The protein operates within pyrimidine metabolism; UMP biosynthesis via de novo pathway; (S)-dihydroorotate from bicarbonate: step 2/3. Its function is as follows. Catalyzes the condensation of carbamoyl phosphate and aspartate to form carbamoyl aspartate and inorganic phosphate, the committed step in the de novo pyrimidine nucleotide biosynthesis pathway. This is Aspartate carbamoyltransferase catalytic subunit from Escherichia coli O139:H28 (strain E24377A / ETEC).